A 362-amino-acid chain; its full sequence is MTENSEKIDRLNDLTTFISTKTGVKGLVDAEITEVPSMFHVPSSILSNNRPSDISGLNLTVPIIDLGDRNTSSRNVVISKIKDAAENWGFFQVINHDVPLTVLEEIKESVRRFHEQDPVVKNQYLPTDNNKRFVYNNDFDLYHSSPLNWRDSFTCYIAPDPPNPEEIPLACRSAVIEYTKHVMELGAVLFQLLSEALGLDSETLKRIDCLKGLFMLCHYYPPCPQPDLTLGISKHTDNSFLTLLLQDQIGGLQVLHEDYWVDVPPVPGALVVNIGDFMQLITNDKFLSVEHRVRPNKDRPRISVACFFSSSLSPNSTVYGPIKDLLSDENPAKYKDITIPEYTAGFLASIFDEKSYLTNYMI.

The region spanning 211–310 is the Fe2OG dioxygenase domain; the sequence is KGLFMLCHYY…RISVACFFSS (100 aa). Histidine 235, aspartate 237, and histidine 291 together coordinate Fe cation. Arginine 301 contributes to the 2-oxoglutarate binding site.

The protein belongs to the iron/ascorbate-dependent oxidoreductase family. Fe(2+) serves as cofactor.

This Arabidopsis thaliana (Mouse-ear cress) protein is 1-aminocyclopropane-1-carboxylate oxidase homolog 10.